A 282-amino-acid polypeptide reads, in one-letter code: Phosphatidylglycerol--prolipoprotein diacylglyceryl transferase (282 aa).

The next 4 helical transmembrane spans lie at 23–43 (IGPLAIHWYGLAYVAGILLGW), 71–91 (FIVWAALGVVLGGRLGYIFFY), 106–126 (IWNGGMSFHGGLTGTTIAMII), and 132–152 (GIPIWSLFDIVATVVPFGLFF). Position 154 (Arg154) interacts with a 1,2-diacyl-sn-glycero-3-phospho-(1'-sn-glycerol). Helical transmembrane passes span 189 to 209 (LYEAGLEGIVLLLVLAALVYG), 217 to 237 (GFITGVFVCGYALSRIFVEFF), and 252 to 272 (WLTMGMVLSSPMILLGLWAML).

The protein belongs to the Lgt family.

It is found in the cell inner membrane. It catalyses the reaction L-cysteinyl-[prolipoprotein] + a 1,2-diacyl-sn-glycero-3-phospho-(1'-sn-glycerol) = an S-1,2-diacyl-sn-glyceryl-L-cysteinyl-[prolipoprotein] + sn-glycerol 1-phosphate + H(+). It participates in protein modification; lipoprotein biosynthesis (diacylglyceryl transfer). Functionally, catalyzes the transfer of the diacylglyceryl group from phosphatidylglycerol to the sulfhydryl group of the N-terminal cysteine of a prolipoprotein, the first step in the formation of mature lipoproteins. This is Phosphatidylglycerol--prolipoprotein diacylglyceryl transferase from Rhizobium leguminosarum bv. trifolii (strain WSM2304).